The following is a 244-amino-acid chain: Cell division protein ZapD (244 aa).

This sequence belongs to the ZapD family. Interacts with FtsZ.

It is found in the cytoplasm. Cell division factor that enhances FtsZ-ring assembly. Directly interacts with FtsZ and promotes bundling of FtsZ protofilaments, with a reduction in FtsZ GTPase activity. The sequence is that of Cell division protein ZapD from Shewanella baltica (strain OS185).